The following is a 279-amino-acid chain: Diaminopimelate epimerase (279 aa).

Substrate contacts are provided by Asn13, Gln46, and Asn66. Catalysis depends on Cys75, which acts as the Proton donor. Residues 76–77 (GN), Asn161, Asn194, and 212–213 (ER) contribute to the substrate site. The active-site Proton acceptor is Cys221. 222–223 (GT) provides a ligand contact to substrate.

This sequence belongs to the diaminopimelate epimerase family. In terms of assembly, homodimer.

The protein localises to the cytoplasm. The enzyme catalyses (2S,6S)-2,6-diaminopimelate = meso-2,6-diaminopimelate. It functions in the pathway amino-acid biosynthesis; L-lysine biosynthesis via DAP pathway; DL-2,6-diaminopimelate from LL-2,6-diaminopimelate: step 1/1. Catalyzes the stereoinversion of LL-2,6-diaminopimelate (L,L-DAP) to meso-diaminopimelate (meso-DAP), a precursor of L-lysine and an essential component of the bacterial peptidoglycan. The protein is Diaminopimelate epimerase of Alkalilimnicola ehrlichii (strain ATCC BAA-1101 / DSM 17681 / MLHE-1).